We begin with the raw amino-acid sequence, 1382 residues long: MLRKLTIEQINDWFTIGKTVTNVELLGAPPAFPAGAAREEVQRQDVAPGAGPAAQAPALAQAPARPAAAFERSLSQRSSEVEYINKYRQLEAQELDVCRSVQPTSGPGPRPSLAKLSSVTCIPGTTYKYPDLPISRYKEEVVSLIESNSVVIIHGATGSGKSTQLPQYILDHYVQRSAYCSIVVTQPRKIGASSIARWISKERAWTLGGVVGYQVGLEKIATEDTRLIYMTTGVLLQKIVSAKSLMEFTHIIIDEVHERTEEMDFLLLVVRKLLRTNSRFVKVVLMSATISCKEFADYFAVPVQNKMNPAYIFEVEGKPHSVEEYYLNDLEHIHHSKLSPHLLEEPVITKDIYEVAVSLIQMFDDLDMKESGNKAWSGAQFVLERSSVLVFLPGLGEINYMHELLTSLVHKRLQVYPLHSSVALEEQNNVFLSPVPGYRKIILSTNIAESSVTVPDVKYVIDFCLTRTLVCDEDTNYQSLRLSWASKTSCNQRKGRAGRVSRGYCYRLVHKDFWDNSIPDHVVPEMLRCPLGSTILKVKLLDMGEPRALLATALSPPGLSDIERTILLLKEVGALAVSGQREDENPHDGELTFLGRVLAQLPVNQQLGKLIVLGHVFGCLDECLIIAAALSLKNFFAMPFRQHLDGYRNKVNFSGSSKSDCIALVEAFKTWKACRQTGELRYPKDELNWGRLNYIQIKRIREVAELYEELKTRISQFNMHVDSRRPVMDQEYIYKQRFILQVVLAGAFYPNYFTFGQPDEEMAVRELAGKDPKTTVVLKHIPPYGFLYYKQLQSLFRQCGQVKSIVFDGAKAFVEFSRNPTERFKTLPAVYMAIKMSQLKVSLELSVHSAEEIEGKVQGMNVSKLRNTRVNVDFQKQTVDPMQVSFNTSDRSQTVTDLLLTIDVTEVVEVGHFWGYRIDENNSEILKKLTAEINQLTLVPLPTHPHPDLVCLAPFADFDKQRYFRAQVLYVSGNSAEVFFVDYGNKSHVDLHLLMEIPCQFLELPFQALEFKICKMRPSAKSLVCGKHWSDGASQWFASLVSGCTLLVKVFSVVHSVLHVDVYQYSGVQDAINIRDVLIQQGYAELTEESYESKQSHEVLKGLFSKSVENMTDGSVPFPMKDDEKYLIRILLESFSTNKLGTPNCKAELHGPFNPYELKCHSLTRISKFRCVWIEKESINSVIISDAPEDLHQRMLVAASLSINATGSTMLLRETSLMPHIPGLPALLSMLFAPVIELRIDQNGKYYTGVLCGLGWNPATGASILPEHDMELAFDVQFSVEDVVEVNILRAAINKLVCDGPNGCKCLGPERVAQLQDIARQKLLGLFCQSKPREKIVPKWHEKPYEWNQVDPKLVMEQADRESSRGKNTFLYQLHKLVVLGT.

Positions 36–62 (AAREEVQRQDVAPGAGPAAQAPALAQA) are disordered. Residues 47–62 (APGAGPAAQAPALAQA) show a composition bias toward low complexity. One can recognise a Helicase ATP-binding domain in the interval 142–308 (VSLIESNSVV…FAVPVQNKMN (167 aa)). 155–162 (GATGSGKS) contributes to the ATP binding site. The DEAH box motif lies at 254–257 (DEVH). Residues 377–544 (SGAQFVLERS…ILKVKLLDMG (168 aa)) form the Helicase C-terminal domain. Residues 944–1004 (HPHPDLVCLA…MEIPCQFLEL (61 aa)) form the Tudor domain.

It belongs to the DEAD box helicase family. DEAH subfamily. As to quaternary structure, interacts with piRNA-associated proteins PIWIL1 and PIWIL4.

It is found in the cytoplasm. The protein localises to the nucleus. It catalyses the reaction ATP + H2O = ADP + phosphate + H(+). ATP-binding RNA helicase required during spermatogenesis. Required to repress transposable elements and prevent their mobilization, which is essential for the germline integrity. Acts via the piRNA metabolic process, which mediates the repression of transposable elements during meiosis by forming complexes composed of piRNAs and Piwi proteins and governs the methylation and subsequent repression of transposons. Acts downstream of piRNA biogenesis: exclusively required for transposon silencing in the nucleus, suggesting that it acts as a nuclear effector in the nucleus together with PIWIL4. The sequence is that of ATP-dependent RNA helicase TDRD9 from Homo sapiens (Human).